The primary structure comprises 859 residues: Probable helicase A859L (859 aa).

A Helicase ATP-binding domain is found at 178 to 349; the sequence is YQELQRSGRA…KNRDLFGGVA (172 aa). Position 191-198 (191-198) interacts with ATP; the sequence is MACRCGKT. A DEAH box motif is present at residues 298-301; the sequence is DECH. The 160-residue stretch at 394-553 folds into the Helicase C-terminal domain; it reads QIIMALAYLK…RFYEHLLNPS (160 aa).

The protein belongs to the asfivirus helicase A859L family.

In Ornithodoros (relapsing fever ticks), this protein is Probable helicase A859L.